Reading from the N-terminus, the 910-residue chain is Chitin synthase A (910 aa).

Residues 56-156 are disordered; sequence NYHDDYDPRP…EPAPTPTPAP (101 aa). Composition is skewed to basic and acidic residues over residues 57–84 and 130–148; these read YHDD…HHDA and DPHD…HDEP. A run of 9 helical transmembrane segments spans residues 366–386, 448–468, 583–603, 620–640, 655–675, 701–721, 730–750, 828–848, and 876–896; these read WFFQ…IDAG, SAFG…YVAL, VYQT…FLVF, VLFI…FILS, MVYF…FITV, TLII…IIFL, FIQY…YAFC, GVVL…LQAG, and LYSV…FLVV.

This sequence belongs to the chitin synthase family. Class I subfamily.

The protein resides in the cell membrane. The enzyme catalyses [(1-&gt;4)-N-acetyl-beta-D-glucosaminyl](n) + UDP-N-acetyl-alpha-D-glucosamine = [(1-&gt;4)-N-acetyl-beta-D-glucosaminyl](n+1) + UDP + H(+). Functionally, polymerizes chitin, a structural polymer of the cell wall and septum, by transferring the sugar moiety of UDP-GlcNAc to the non-reducing end of the growing chitin polymer. In Ampelomyces quisqualis (Powdery mildew agent), this protein is Chitin synthase A (CHSA).